The primary structure comprises 1004 residues: Unconventional myosin-Id (1004 aa).

Residues 9-695 form the Myosin motor domain; that stretch reads FGKADFVLLD…TIFSLEEQRA (687 aa). An ATP-binding site is contributed by 102–109; that stretch reads GESGAGKT. The tract at residues 572–594 is actin-binding; the sequence is MISLVEKLASKEPYYVRCIKPND. IQ domains follow at residues 699-719 and 721-741; these read KRIV…MRYR and MRAA…SYIR. Residues 812–1003 form the TH1 domain; the sequence is GQRADLGLQR…RSGYILSVPG (192 aa).

The protein belongs to the TRAFAC class myosin-kinesin ATPase superfamily. Myosin family. Interacts (via the two IQ motifs) with calmodulin. Interacts with F-actin.

The protein localises to the cytoplasm. It is found in the perikaryon. It localises to the cell projection. The protein resides in the dendrite. Its subcellular location is the early endosome. The protein localises to the cell cortex. Unconventional myosin that functions as actin-based motor protein with ATPase activity. Plays a role in the formation of Kupffer's vesicle, an organ that functions as a left-right organizer during embryogenesis. Plays a role in vesicular trafficking events that are required for normal lumen expansion of Kupffer's vesicle. Required for normal orientation of cilia in Kupffer's vesicle, and thus for normal, unidirectional circular flow and normal angular flow velocity, which then mediates asymmetric gene expression and left-right asymmetric development. Plays a role in endosomal protein trafficking, and especially in the transfer of cargo proteins from early to recycling endosomes. Required for normal planar cell polarity in ciliated cells, for normal rotational polarity of cilia, and for coordinated, unidirectional ciliary movement. In Danio rerio (Zebrafish), this protein is Unconventional myosin-Id (myo1d).